The primary structure comprises 177 residues: ATP synthase subunit delta (177 aa).

Belongs to the ATPase delta chain family. F-type ATPases have 2 components, F(1) - the catalytic core - and F(0) - the membrane proton channel. F(1) has five subunits: alpha(3), beta(3), gamma(1), delta(1), epsilon(1). F(0) has three main subunits: a(1), b(2) and c(10-14). The alpha and beta chains form an alternating ring which encloses part of the gamma chain. F(1) is attached to F(0) by a central stalk formed by the gamma and epsilon chains, while a peripheral stalk is formed by the delta and b chains.

Its subcellular location is the cell inner membrane. In terms of biological role, f(1)F(0) ATP synthase produces ATP from ADP in the presence of a proton or sodium gradient. F-type ATPases consist of two structural domains, F(1) containing the extramembraneous catalytic core and F(0) containing the membrane proton channel, linked together by a central stalk and a peripheral stalk. During catalysis, ATP synthesis in the catalytic domain of F(1) is coupled via a rotary mechanism of the central stalk subunits to proton translocation. This protein is part of the stalk that links CF(0) to CF(1). It either transmits conformational changes from CF(0) to CF(1) or is implicated in proton conduction. The chain is ATP synthase subunit delta from Aliivibrio salmonicida (strain LFI1238) (Vibrio salmonicida (strain LFI1238)).